The primary structure comprises 643 residues: Protein THEMIS2 (643 aa).

2 CABIT regions span residues 1 to 238 (MEPV…TASS) and 239 to 514 (RHVH…KAKG). A disordered region spans residues 546-631 (EIQAPPPRPP…RQDLDDDEHD (86 aa)). At Thr593 the chain carries Phosphothreonine. The span at 609–619 (PAHRKGHRPAK) shows a compositional bias: basic residues. Tyr632 is subject to Phosphotyrosine.

The protein belongs to the themis family. In terms of assembly, interacts with VAV1. Interacts with LAT. Interacts constitutively with GRB2, LYN and PLCG2; these interactions increase the activation of PLCG2 and its downstream pathways following B cell receptor stimulation. In terms of processing, phosphorylation at Tyr-632 is induced by LPS. Phosphorylated by Src kinases (Lck or Fyn) following BCR engagement. As to expression, expressed in different endometrial adenocarcinoma cell lines and various other cell lines apart from the prostate cell line LNCaP and the ovarian cancer cell line BG1.

Its subcellular location is the nucleus. It localises to the cytoplasm. In terms of biological role, may constitute a control point in macrophage inflammatory response, promoting LPS-induced TLR4-mediated TNF production. Determines the threshold for activation of B cells by low-affinity and low-avidity ligands via PLCG2 activation and its downstream pathways. The protein is Protein THEMIS2 of Homo sapiens (Human).